A 607-amino-acid chain; its full sequence is CUB and zona pellucida-like domain-containing protein 1 (607 aa).

A signal peptide spans 1 to 24 (MELVRRLMPLTLLILSCLAELTMA). A disulfide bridge links C17 with C58. CUB domains are found at residues 25-146 (EAEG…YFFS) and 154-265 (CGGY…YTSI). The Lumenal segment spans residues 25–568 (EAEGNASCTV…EETPNQPFNS (544 aa)). N-linked (GlcNAc...) asparagine glycosylation is found at N29, N57, and N67. Intrachain disulfides connect C85-C107, C154-C180, and C207-C229. Residues 276–519 (TCSSDRMRVI…SRCNQGCVSR (244 aa)) enclose the ZP domain. Residues N394 and N419 are each glycosylated (N-linked (GlcNAc...) asparagine). A disulfide bridge links C442 with C498. The chain crosses the membrane as a helical span at residues 569-589 (VHLFSFMVLALNVVTVATITV). Topologically, residues 590-607 (RHFVNQRADYKYQKLQNY) are cytoplasmic.

Detected in pancreas and epithelium of ovary. Expressed at higher levels in ovarian tumors than in normal tissue.

The protein localises to the zymogen granule membrane. Functionally, localized to zymogen granules, where it functions in trypsinogen activation. May indirectly regulate cell motility, cell-cell and cell/extracellular matrix interactions. In Homo sapiens (Human), this protein is CUB and zona pellucida-like domain-containing protein 1.